We begin with the raw amino-acid sequence, 281 residues long: MTQKTIRVGDIEIANDRPMALFGGMNVLESRDLALRVCEEYVRVTGKLGIPYVFKASFDKANRSSITSFRGPGLEEGMRIFEEVKKAFGVPVLTDVHEPWQAAPVAEVCDILQLPAFLSRQTDLVVAMAKTSAVINIKKAQFLAPQEMQHILRKCEEAGNDQLILCERGTSFGYNNLVVDMLGFGIMKQFEYPVFFDVTHALQMPGGRADSAGGRRAQVTDLAKAGISQGLAGLFLEAHPDPDNAKCDGPCALRLDKLEPFLAQLAQLDALVKKFPPIETA.

It belongs to the KdsA family.

The protein resides in the cytoplasm. The catalysed reaction is D-arabinose 5-phosphate + phosphoenolpyruvate + H2O = 3-deoxy-alpha-D-manno-2-octulosonate-8-phosphate + phosphate. It participates in carbohydrate biosynthesis; 3-deoxy-D-manno-octulosonate biosynthesis; 3-deoxy-D-manno-octulosonate from D-ribulose 5-phosphate: step 2/3. It functions in the pathway bacterial outer membrane biogenesis; lipopolysaccharide biosynthesis. The chain is 2-dehydro-3-deoxyphosphooctonate aldolase from Azotobacter vinelandii (strain DJ / ATCC BAA-1303).